Reading from the N-terminus, the 110-residue chain is Quaternary ammonium compound-resistance protein QacF (110 aa).

Transmembrane regions (helical) follow at residues 1–21 (MKNW…TSAL), 31–51 (VPSV…SLAL), 58–78 (IAYA…AWIF), and 85–105 (FWAF…NLLS).

This sequence belongs to the drug/metabolite transporter (DMT) superfamily. Small multidrug resistance (SMR) (TC 2.A.7.1) family.

It localises to the cell membrane. Its function is as follows. Multidrug exporter. Is implicated for the resistance to bacteriocidal quaternary ammonium compounds. The polypeptide is Quaternary ammonium compound-resistance protein QacF (qacF) (Klebsiella aerogenes (Enterobacter aerogenes)).